Here is a 277-residue protein sequence, read N- to C-terminus: Large ribosomal subunit protein uL2 (277 aa).

Positions 219–277 are disordered; it reads TVRGSVMNPNDHPHGGGEGKAPVGRKAPSTPWGKPALGLKTRNKKAKSDKLIVRRRNEK. Residues 264-277 are compositionally biased toward basic and acidic residues; the sequence is AKSDKLIVRRRNEK.

Belongs to the universal ribosomal protein uL2 family. In terms of assembly, part of the 50S ribosomal subunit. Forms a bridge to the 30S subunit in the 70S ribosome.

Functionally, one of the primary rRNA binding proteins. Required for association of the 30S and 50S subunits to form the 70S ribosome, for tRNA binding and peptide bond formation. It has been suggested to have peptidyltransferase activity; this is somewhat controversial. Makes several contacts with the 16S rRNA in the 70S ribosome. The protein is Large ribosomal subunit protein uL2 of Streptococcus sanguinis (strain SK36).